Reading from the N-terminus, the 272-residue chain is uncharacterized protein (272 aa).

Residues 1–20 (MKLRKIFLLPLISLSTLSVA) form the signal peptide. A lipid anchor (N-palmitoyl cysteine) is attached at C21. Residue C21 is the site of S-diacylglycerol cysteine attachment.

Belongs to the MG439/MG440 family.

The protein resides in the cell membrane. This is an uncharacterized protein from Mycoplasma genitalium (strain ATCC 33530 / DSM 19775 / NCTC 10195 / G37) (Mycoplasmoides genitalium).